Here is a 695-residue protein sequence, read N- to C-terminus: Ubiquitin carboxyl-terminal hydrolase 20 (695 aa).

Disordered stretches follow at residues 1–20 and 42–162; these read MLMA…SSIL and SLAL…SLFY. Low complexity-rich tracts occupy residues 9-20 and 61-86; these read PSSILPRSSSIL and NHDS…SQSV. Over residues 112-124 the composition is skewed to acidic residues; that stretch reads DDIDDDIWGDDDL. One can recognise a USP domain in the interval 176–476; the sequence is AGLWNLGNSC…DSYILFYARE (301 aa). Catalysis depends on Cys-185, which acts as the Nucleophile. Residue His-435 is the Proton acceptor of the active site. Residues 556 to 571 show a composition bias toward low complexity; it reads SAESSSGEESPMGELL. Disordered stretches follow at residues 556-585 and 674-695; these read SAES…PCTE and AREL…LKTT.

It belongs to the peptidase C19 family.

It carries out the reaction Thiol-dependent hydrolysis of ester, thioester, amide, peptide and isopeptide bonds formed by the C-terminal Gly of ubiquitin (a 76-residue protein attached to proteins as an intracellular targeting signal).. In terms of biological role, recognizes and hydrolyzes the peptide bond at the C-terminal Gly of ubiquitin. Involved in the processing of poly-ubiquitin precursors as well as that of ubiquitinated proteins. In Arabidopsis thaliana (Mouse-ear cress), this protein is Ubiquitin carboxyl-terminal hydrolase 20 (UBP20).